Reading from the N-terminus, the 198-residue chain is Charged multivesicular body protein 2a homolog 2 (198 aa).

Residues 11–42 (KEVLRENQRNLNKSMREIDRERVALQNQEKKI) adopt a coiled-coil conformation.

The protein belongs to the SNF7 family. Probable core component of the endosomal sorting required for transport complex III (ESCRT-III). ESCRT-III components are thought to multimerize to form a flat lattice on the perimeter membrane of the endosome.

Its subcellular location is the endosome membrane. Its function is as follows. Probable core component of the endosomal sorting required for transport complex III (ESCRT-III) which is involved in multivesicular bodies (MVBs) formation and sorting of endosomal cargo proteins into MVBs. MVBs contain intraluminal vesicles (ILVs) that are generated by invagination and scission from the limiting membrane of the endosome and are delivered to lysosomes enabling degradation of membrane proteins. In Dictyostelium discoideum (Social amoeba), this protein is Charged multivesicular body protein 2a homolog 2 (chmp2a2).